The following is a 662-amino-acid chain: Aprataxin-like protein (662 aa).

The HIT domain maps to 4–108 (SSALIKDISK…ISKDFVSTSL (105 aa)). The segment at 381–403 (LRCNQCEFVTNMLLDLKAHLYQH) adopts a C2H2-type zinc-finger fold. The disordered stretch occupies residues 482-662 (KNINGPSVNM…PAPPSNSKPS (181 aa)). Low complexity predominate over residues 490–500 (NMMNQNNPNNP). 2 stretches are compositionally biased toward polar residues: residues 501–513 (FRNT…QSQK) and 560–569 (GHQQFPNASS). The span at 570–582 (VGGGQTGLPGQGQ) shows a compositional bias: gly residues. Polar residues predominate over residues 588–599 (WNSNKIFNQQNR). Residues 600–626 (QNTVQAQPQAQNQQTNQQQIQNSNKNQ) show a composition bias toward low complexity. Pro residues predominate over residues 653 to 662 (PAPPSNSKPS).

The protein resides in the nucleus. Its function is as follows. DNA-binding protein involved in single-strand DNA break repair, double-strand DNA break repair and base excision repair. Resolves abortive DNA ligation intermediates formed either at base excision sites, or when DNA ligases attempt to repair non-ligatable breaks induced by reactive oxygen species. Catalyzes the release of adenylate groups covalently linked to 5'-phosphate termini, resulting in the production of 5'-phosphate termini that can be efficiently rejoined. This is Aprataxin-like protein from Drosophila melanogaster (Fruit fly).